Reading from the N-terminus, the 425-residue chain is Protein-glutamate methylesterase/protein-glutamine glutaminase (425 aa).

The 119-residue stretch at 22–140 (RVMVVDDSVV…EVAAADIFRH (119 aa)) folds into the Response regulatory domain. Position 73 is a 4-aspartylphosphate (D73). Disordered regions lie at residues 150–174 (AAKR…SNAS) and 203–223 (VQRE…RPQP). Positions 221 to 417 (PQPTLRSFSA…PLQQIAPKLV (197 aa)) constitute a CheB-type methylesterase domain. Active-site residues include S241, H269, and D365.

The protein belongs to the CheB family. In terms of processing, phosphorylated by CheA. Phosphorylation of the N-terminal regulatory domain activates the methylesterase activity.

It localises to the cytoplasm. It carries out the reaction [protein]-L-glutamate 5-O-methyl ester + H2O = L-glutamyl-[protein] + methanol + H(+). It catalyses the reaction L-glutaminyl-[protein] + H2O = L-glutamyl-[protein] + NH4(+). Its function is as follows. Involved in chemotaxis. Part of a chemotaxis signal transduction system that modulates chemotaxis in response to various stimuli. Catalyzes the demethylation of specific methylglutamate residues introduced into the chemoreceptors (methyl-accepting chemotaxis proteins or MCP) by CheR. Also mediates the irreversible deamidation of specific glutamine residues to glutamic acid. This Nitrobacter winogradskyi (strain ATCC 25391 / DSM 10237 / CIP 104748 / NCIMB 11846 / Nb-255) protein is Protein-glutamate methylesterase/protein-glutamine glutaminase.